The following is a 176-amino-acid chain: Probable chorismate pyruvate-lyase (176 aa).

Substrate contacts are provided by Arg70, Leu108, and Glu166.

It belongs to the UbiC family.

Its subcellular location is the cytoplasm. It catalyses the reaction chorismate = 4-hydroxybenzoate + pyruvate. It functions in the pathway cofactor biosynthesis; ubiquinone biosynthesis. Functionally, removes the pyruvyl group from chorismate, with concomitant aromatization of the ring, to provide 4-hydroxybenzoate (4HB) for the ubiquinone pathway. The protein is Probable chorismate pyruvate-lyase of Dechloromonas aromatica (strain RCB).